Reading from the N-terminus, the 355-residue chain is Protein MGF 360-10L (355 aa).

The stretch at 57–89 is one ANK repeat; that stretch reads DLNTALMLATKENNYQLIKLFTEWGADINYGLI.

It belongs to the asfivirus MGF 360 family.

In terms of biological role, plays a role in virus cell tropism, and may be required for efficient virus replication in macrophages. In African swine fever virus (isolate Tick/Malawi/Lil 20-1/1983) (ASFV), this protein is Protein MGF 360-10L.